The sequence spans 290 residues: Lipoyl synthase (290 aa).

Residues Cys-34, Cys-39, Cys-45, Cys-60, Cys-64, Cys-67, and Ser-273 each contribute to the [4Fe-4S] cluster site. Residues 46–262 (WNKRHATVMI…KYIAYSKGFL (217 aa)) enclose the Radical SAM core domain.

It belongs to the radical SAM superfamily. Lipoyl synthase family. Requires [4Fe-4S] cluster as cofactor.

Its subcellular location is the cytoplasm. It carries out the reaction [[Fe-S] cluster scaffold protein carrying a second [4Fe-4S](2+) cluster] + N(6)-octanoyl-L-lysyl-[protein] + 2 oxidized [2Fe-2S]-[ferredoxin] + 2 S-adenosyl-L-methionine + 4 H(+) = [[Fe-S] cluster scaffold protein] + N(6)-[(R)-dihydrolipoyl]-L-lysyl-[protein] + 4 Fe(3+) + 2 hydrogen sulfide + 2 5'-deoxyadenosine + 2 L-methionine + 2 reduced [2Fe-2S]-[ferredoxin]. It participates in protein modification; protein lipoylation via endogenous pathway; protein N(6)-(lipoyl)lysine from octanoyl-[acyl-carrier-protein]: step 2/2. In terms of biological role, catalyzes the radical-mediated insertion of two sulfur atoms into the C-6 and C-8 positions of the octanoyl moiety bound to the lipoyl domains of lipoate-dependent enzymes, thereby converting the octanoylated domains into lipoylated derivatives. The polypeptide is Lipoyl synthase (Wolbachia pipientis subsp. Culex pipiens (strain wPip)).